Here is a 139-residue protein sequence, read N- to C-terminus: Ribosomal RNA large subunit methyltransferase H (139 aa).

S-adenosyl-L-methionine-binding positions include Leu-57, Gly-88, and 107-112 (LSAMTF).

It belongs to the RNA methyltransferase RlmH family. Homodimer.

Its subcellular location is the cytoplasm. The enzyme catalyses pseudouridine(1915) in 23S rRNA + S-adenosyl-L-methionine = N(3)-methylpseudouridine(1915) in 23S rRNA + S-adenosyl-L-homocysteine + H(+). Its function is as follows. Specifically methylates the pseudouridine at position 1915 (m3Psi1915) in 23S rRNA. This is Ribosomal RNA large subunit methyltransferase H from Solibacter usitatus (strain Ellin6076).